A 217-amino-acid chain; its full sequence is Somatotropin (217 aa).

A signal peptide spans 1 to 27; that stretch reads MATGSHTATLLLAVALLGLPWPQEAGA. Histidine 46 is a Zn(2+) binding site. Cysteines 79 and 190 form a disulfide. Serine 132 is subject to Phosphoserine. Residue glutamate 199 coordinates Zn(2+). Cysteines 207 and 215 form a disulfide.

The protein belongs to the somatotropin/prolactin family.

Its subcellular location is the secreted. Its function is as follows. Plays an important role in growth control. Its major role in stimulating body growth is to stimulate the liver and other tissues to secrete IGF1. It stimulates both the differentiation and proliferation of myoblasts. It also stimulates amino acid uptake and protein synthesis in muscle and other tissues. This Xanthonycticebus pygmaeus (Pygmy slow loris) protein is Somatotropin (GH1).